The primary structure comprises 590 residues: DNA mismatch repair protein MutL (590 aa).

This sequence belongs to the DNA mismatch repair MutL/HexB family.

Its function is as follows. This protein is involved in the repair of mismatches in DNA. It is required for dam-dependent methyl-directed DNA mismatch repair. May act as a 'molecular matchmaker', a protein that promotes the formation of a stable complex between two or more DNA-binding proteins in an ATP-dependent manner without itself being part of a final effector complex. This Caldanaerobacter subterraneus subsp. tengcongensis (strain DSM 15242 / JCM 11007 / NBRC 100824 / MB4) (Thermoanaerobacter tengcongensis) protein is DNA mismatch repair protein MutL.